A 353-amino-acid polypeptide reads, in one-letter code: E3 ubiquitin-protein ligase TRIM63 (353 aa).

Residues 23-79 form an RING-type zinc finger; that stretch reads CPICLEMFTKPVVILPCQHNLCRKCANDIFQAANPYWTSRGSSVSMSGGRFRCPTCR. The tract at residues 74–218 is interaction with TTN; that stretch reads RCPTCRHEVI…LSQKFDTLYA (145 aa). A B box-type zinc finger spans residues 117–159; sequence GSHPMCKEHEDEKINIYCLTCEVPTCSMCKVFGIHKACEVAPL. Zn(2+) contacts are provided by Cys122, His125, Cys145, and His151. Residues 207–269 are a coiled coil; sequence EELSQKFDTL…VETAIQSLDE (63 aa). The COS domain maps to 267–325; the sequence is LDEPGGATFLLTAKQLIKSIVEASKGCQLGKTEQGFENMDFFTLDLEHIADALRAIDFG. Residues 326-344 show a composition bias toward acidic residues; the sequence is TDEEEEEFIEEEDQEEEES. Positions 326–353 are disordered; that stretch reads TDEEEEEFIEEEDQEEEESTEGKEEGHQ.

In terms of assembly, homodimer. Homooligomer and heterooligomer. Interacts with SUMO2, titin/TTN and GMEB1. Interacts with TRIM54 and probably with TRIM55 and TNNI3. Forms a ternary complex with RACK1 and PRKCE. Interacts with CKM. Muscle specific. Selectively expressed in heart and skeletal muscle. Also expressed in the iris.

It localises to the cytoplasm. Its subcellular location is the nucleus. The protein localises to the myofibril. The protein resides in the sarcomere. It is found in the m line. It localises to the z line. It catalyses the reaction S-ubiquitinyl-[E2 ubiquitin-conjugating enzyme]-L-cysteine + [acceptor protein]-L-lysine = [E2 ubiquitin-conjugating enzyme]-L-cysteine + N(6)-ubiquitinyl-[acceptor protein]-L-lysine.. Its pathway is protein modification; protein ubiquitination. Its function is as follows. E3 ubiquitin ligase. Mediates the ubiquitination and subsequent proteasomal degradation of CKM, GMEB1 and HIBADH. Regulates the proteasomal degradation of muscle proteins under amino acid starvation, where muscle protein is catabolized to provide other organs with amino acids. Inhibits de novo skeletal muscle protein synthesis under amino acid starvation. Regulates proteasomal degradation of cardiac troponin I/TNNI3 and probably of other sarcomeric-associated proteins. May play a role in striated muscle atrophy and hypertrophy by regulating an anti-hypertrophic PKC-mediated signaling pathway. May regulate the organization of myofibrils through TTN in muscle cells. The chain is E3 ubiquitin-protein ligase TRIM63 (TRIM63) from Homo sapiens (Human).